A 500-amino-acid polypeptide reads, in one-letter code: FAD-linked oxidoreductase srdI (500 aa).

A signal peptide spans 1–20; sequence MHLSSSLLFTSALLAGGINA. N47 carries N-linked (GlcNAc...) asparagine glycosylation. An FAD-binding PCMH-type domain is found at 69–241; the sequence is YRPPSYQAAI…TQATYKMHKS (173 aa). N-linked (GlcNAc...) asparagine glycosylation is found at N257 and N282.

Belongs to the oxygen-dependent FAD-linked oxidoreductase family. FAD is required as a cofactor.

Its function is as follows. FAD-linked oxidoreductase; part of the gene cluster that mediates the biosynthesis of sordarial, a salicylic aldehyde structurally related to the phytotoxin pyriculol. The most interesting aspect of this pathway is formation of an aromatic product from the highly reducing polyketide synthase srdA. SrdA synthesizes a reduced polyketide chain from one molecule of acetyl-CoA and five molecules of malonyl-CoA. The polyketide chain is then reductively released as an aldehyde. The oxidoreductases srdC, srdD and srdE then oxidize one of the hydroxy groups to facilitate the intramolecular aldol condensation, followed by dehydration to yield a salicylic aldehyde. This aldehyde can undergo facile reduction by endogenous reductases to yield the alcohol 1-hydroxy-2-hydroxymethyl-3-pent-1,3-dienylbenzene. The flavin-dependent srdI counteract against the propensity of the aldehydes to be reduced under physiological conditions and is responsible for reoxidizing 1-hydroxy-2-hydroxymethyl-3-pent-1,3-dienylbenzene back to the salicylic aldehyde. This salicylic aldehyde is then selectively epoxidized by the cupin-domain-containing oxidoreductase srdB to yield the epoxide, which can be hydrolyzed stereoselectively by the hydrolase srdG to give the final product sordarial. The sequence is that of FAD-linked oxidoreductase srdI from Neurospora crassa (strain ATCC 24698 / 74-OR23-1A / CBS 708.71 / DSM 1257 / FGSC 987).